The sequence spans 98 residues: NADH-ubiquinone oxidoreductase chain 4L (98 aa).

The next 3 membrane-spanning stretches (helical) occupy residues 1 to 21 (MPLIYMNITLAFAISLLGMLI), 29 to 49 (SLLCLEGMMLSLFIMSTLMAL), and 61 to 81 (VVLLVFAACEAAVGLALLVSI).

The protein belongs to the complex I subunit 4L family. In terms of assembly, core subunit of respiratory chain NADH dehydrogenase (Complex I) which is composed of 45 different subunits.

It is found in the mitochondrion inner membrane. The catalysed reaction is a ubiquinone + NADH + 5 H(+)(in) = a ubiquinol + NAD(+) + 4 H(+)(out). Core subunit of the mitochondrial membrane respiratory chain NADH dehydrogenase (Complex I) which catalyzes electron transfer from NADH through the respiratory chain, using ubiquinone as an electron acceptor. Part of the enzyme membrane arm which is embedded in the lipid bilayer and involved in proton translocation. The polypeptide is NADH-ubiquinone oxidoreductase chain 4L (MT-ND4L) (Hylobates lar (Lar gibbon)).